A 333-amino-acid chain; its full sequence is 2-haloacrylate reductase (333 aa).

153 to 159 (AAAGGMG) serves as a coordination point for NADP(+).

The protein belongs to the zinc-containing alcohol dehydrogenase family.

The catalysed reaction is (S)-2-chloropropanoate + NADP(+) = 2-chloroacrylate + NADPH + H(+). In terms of biological role, involved in the degradation of unsaturated organohalogen compounds. Catalyzes the NADPH-dependent reduction of the carbon-carbon double bond of 2-chloroacrylate to produce (S)-2-chloropropionate, which is probably further metabolized to (R)-lactate by (S)-2-haloacid dehalogenase. Can also use 2-bromoacrylate as substrate. Does not act on acrylate, methacrylate, 1,4-benzoquinone and 1,4-naphthoquinone. The chain is 2-haloacrylate reductase from Burkholderia sp.